Here is a 548-residue protein sequence, read N- to C-terminus: Cilia- and flagella-associated protein 97 (548 aa).

Residues S8 and S19 each carry the phosphoserine modification. Disordered regions lie at residues 85–297 (NYLT…RQEN), 407–431 (LSRQAEKPGNKSTIPGRSLGHPPKL), and 497–548 (YSPL…LRSH). Residues 91-107 (GNERKPKFPSKEQHVEN) show a composition bias toward basic and acidic residues. Positions 112 to 121 (TRSPSLLTSS) are enriched in low complexity. The segment covering 152 to 161 (DYYTDGEESS) has biased composition (acidic residues). Position 155 is a phosphothreonine (T155). Phosphoserine occurs at positions 160 and 161. Residues 191–209 (KASSSSLSSSSSRSSSDCS) are compositionally biased toward low complexity. The segment covering 214–237 (DMQNKPDSGSSGKRVSSVTPSSPK) has biased composition (polar residues). S235 carries the post-translational modification Phosphoserine. The segment covering 238–248 (QKCKSGRKSSA) has biased composition (basic residues). At S259 the chain carries Phosphoserine. Over residues 264–289 (TDVTPASTPDSSPAQPFELSQSQNQK) the composition is skewed to polar residues. Residues 383–460 (RKNYSFTREE…ALLKRLEAVK (78 aa)) adopt a coiled-coil conformation. 2 stretches are compositionally biased toward polar residues: residues 504–514 (SRTSSATSGLS) and 537–548 (IQCSNSKVLRSH).

Belongs to the CFAP97 family.

The protein is Cilia- and flagella-associated protein 97 of Rattus norvegicus (Rat).